Here is a 103-residue protein sequence, read N- to C-terminus: Small ribosomal subunit protein uS10 (103 aa).

It belongs to the universal ribosomal protein uS10 family. Part of the 30S ribosomal subunit.

Involved in the binding of tRNA to the ribosomes. The protein is Small ribosomal subunit protein uS10 of Helicobacter hepaticus (strain ATCC 51449 / 3B1).